A 314-amino-acid chain; its full sequence is MNPPRLPPAILIMGPTASGKTAVAMALADRFPVELISVDSAQVFIDMDVGTAKPDRATLDRYPHRLIDLITPEESYSAARFRADALTAMAEITAAGKVPVLVGGTMMYYRALLHGLADLPQADAELRAEIDAEAAAEGWPAMHAKLALVDPATAARLHPTDSQRLQRALEICRLTGRPMSELLAESEKQKPPYDLLQIGLLPSDRAVLHQRIARRFDEMLLAGLDEEVRQLRQKYELNLNLPSMRCVGYRQTWEMQEGLIPKREWRDRGVFATRQLAKRQITWLTNSFAAENYDCLDPALVERIAARTEAFLSS.

Gly14–Thr21 lines the ATP pocket. Thr16 to Thr21 lines the substrate pocket. Interaction with substrate tRNA regions lie at residues Asp39–Gln42, Gln163–Arg167, and Arg245–Arg250.

It belongs to the IPP transferase family. In terms of assembly, monomer. Requires Mg(2+) as cofactor.

It catalyses the reaction adenosine(37) in tRNA + dimethylallyl diphosphate = N(6)-dimethylallyladenosine(37) in tRNA + diphosphate. Its function is as follows. Catalyzes the transfer of a dimethylallyl group onto the adenine at position 37 in tRNAs that read codons beginning with uridine, leading to the formation of N6-(dimethylallyl)adenosine (i(6)A). The protein is tRNA dimethylallyltransferase of Dechloromonas aromatica (strain RCB).